A 416-amino-acid polypeptide reads, in one-letter code: Probable glucan 1,3-beta-glucosidase A (416 aa).

The first 22 residues, 1-22, serve as a signal peptide directing secretion; it reads MIFKFSQKALVALYLVVGLAEA. Glu-211 serves as the catalytic Proton donor. 2 disulfides stabilise this stretch: Cys-291–Cys-415 and Cys-316–Cys-342. Residue Glu-308 is the Nucleophile of the active site. Asn-344 carries an N-linked (GlcNAc...) asparagine glycan.

Belongs to the glycosyl hydrolase 5 (cellulase A) family. Monomer. Mn(2+) serves as cofactor.

The protein resides in the secreted. It carries out the reaction Successive hydrolysis of beta-D-glucose units from the non-reducing ends of (1-&gt;3)-beta-D-glucans, releasing alpha-glucose.. Functionally, beta-glucanases participate in the metabolism of beta-glucan, the main structural component of the cell wall. It could also function biosynthetically as a transglycosylase. The protein is Probable glucan 1,3-beta-glucosidase A (exgA) of Aspergillus fumigatus (strain ATCC MYA-4609 / CBS 101355 / FGSC A1100 / Af293) (Neosartorya fumigata).